A 250-amino-acid chain; its full sequence is 5-oxoprolinase subunit A (250 aa).

Belongs to the LamB/PxpA family. In terms of assembly, forms a complex composed of PxpA, PxpB and PxpC.

It catalyses the reaction 5-oxo-L-proline + ATP + 2 H2O = L-glutamate + ADP + phosphate + H(+). In terms of biological role, catalyzes the cleavage of 5-oxoproline to form L-glutamate coupled to the hydrolysis of ATP to ADP and inorganic phosphate. The sequence is that of 5-oxoprolinase subunit A from Streptomyces avermitilis (strain ATCC 31267 / DSM 46492 / JCM 5070 / NBRC 14893 / NCIMB 12804 / NRRL 8165 / MA-4680).